The primary structure comprises 578 residues: Synaptic defective enhancer 1 (578 aa).

4 disordered regions span residues 1–62 (MGEP…RKET), 173–216 (SEQA…SMDQ), 426–457 (PPLPPPQAPFSGDCWRAQPAAPVPASVPVSSA), and 474–578 (LGLH…FSNF). Residues 444 to 455 (PAAPVPASVPVS) are compositionally biased toward low complexity. Composition is skewed to pro residues over residues 481 to 491 (PPPPPPPPPPT) and 500 to 542 (IPPP…PNPN). The segment covering 565–578 (NQFPPQQQQSFSNF) has biased composition (low complexity).

In terms of assembly, may interact (via C-terminus) with ssup-72; the interaction may prevent ssup-72 binding to RNA polymerase II subunit ama-1. As to expression, expressed in germline, oocytes, epidermis, pharyngeal bulb and neurons.

The protein localises to the nucleus. Its subcellular location is the nucleus speckle. In terms of biological role, acts as a negative regulator of nuclear pre-mRNA 3'-end processing (mRNA polyadenylation). Plays a role in tissue-specific expression of protein isoforms by regulating differential processing of pre-mRNA 3'-end (alternative polyadenylation). In neurons, regulates alternative polyadenylation of specific mRNAs including unc-44 and dlk-1 by interacting with phosphatase ssup-72 and thus preventing ssup-72 dephosphorylation of RNA polymerase II subunit ama-1. Specifically, alters the usage of internal polyadenylation sites (PAS) to promote the production of neuron-specific unc-44 isoform and dlk-1 isoform c, both required for normal synapse and axon development. Conversely, in the epidermis, by inhibiting ssup-72 function, promotes the usage of an internal PAS preventing the production of one of unc-44 isoforms. In neurons, also negatively regulates protein levels of pre-RNA processing protein psf-2. This is Synaptic defective enhancer 1 from Caenorhabditis elegans.